The primary structure comprises 641 residues: DNA mismatch repair protein MutL (641 aa).

The tract at residues 345-445 (PAAVAPPAPA…GDTSLGDTSP (101 aa)) is disordered. Over residues 419–429 (PRTEPATRTGE) the composition is skewed to basic and acidic residues. Polar residues predominate over residues 432 to 442 (GISSGDTSLGD).

Belongs to the DNA mismatch repair MutL/HexB family.

This protein is involved in the repair of mismatches in DNA. It is required for dam-dependent methyl-directed DNA mismatch repair. May act as a 'molecular matchmaker', a protein that promotes the formation of a stable complex between two or more DNA-binding proteins in an ATP-dependent manner without itself being part of a final effector complex. This is DNA mismatch repair protein MutL from Azotobacter vinelandii (strain DJ / ATCC BAA-1303).